The primary structure comprises 313 residues: Olfactory receptor 56A5 (313 aa).

Topologically, residues 1 to 33 (MTLPSNNSTSPVFEFFLICFPSFQSWQHWLSLP) are extracellular. N6 and N7 each carry an N-linked (GlcNAc...) asparagine glycan. The chain crosses the membrane as a helical span at residues 34-54 (LSLLFLLAMGANATLLITIYL). At 55–67 (EASLHQPLYYLLS) the chain is on the cytoplasmic side. Residues 68–88 (LLSLLDIVLCLTVIPKVLAIF) traverse the membrane as a helical segment. Topologically, residues 89–100 (WFDLRSISFPAC) are extracellular. A disulfide bridge connects residues C100 and C182. Residues 101-121 (FLQVFIMNSFLTMESCTFMIM) form a helical membrane-spanning segment. Over 122 to 146 (AYDRYVAICKPLQYSSIITDQFVAR) the chain is Cytoplasmic. Residues 147-167 (AAIFVVARNGLLTMPIPILSS) traverse the membrane as a helical segment. Topologically, residues 168–203 (RLRYCAGHIIKNCICTNVSVSKLSCDDITLNQSYQF) are extracellular. Residues N184 and N198 are each glycosylated (N-linked (GlcNAc...) asparagine). The chain crosses the membrane as a helical span at residues 204–224 (VIGWTLLGSDLILIVLSYFFI). The Cytoplasmic segment spans residues 225–246 (LKTVLRIKGEGDMAKALGTCGS). A helical membrane pass occupies residues 247–267 (HFILILFFTTVLLVLVITNLA). The Extracellular portion of the chain corresponds to 268 to 276 (RKRIPPDVP). A helical membrane pass occupies residues 277-297 (ILLNILHHLIPPALNPIVYGV). Topologically, residues 298–313 (RTKEIKQGIQNLLRRL) are cytoplasmic.

The protein belongs to the G-protein coupled receptor 1 family.

It is found in the cell membrane. Odorant receptor. This is Olfactory receptor 56A5 (OR56A5) from Homo sapiens (Human).